A 287-amino-acid chain; its full sequence is Taxis protein CheF2 (287 aa).

Interacts with chemotaxis (Che) proteins as well as flagella accessory (Fla) proteins.

In terms of biological role, involved in taxis signal transduction. The chain is Taxis protein CheF2 (cheF2) from Halobacterium salinarum (strain ATCC 29341 / DSM 671 / R1).